The primary structure comprises 451 residues: Tubulin alpha-2 chain (451 aa).

Q11 is a binding site for GTP. The residue at position 40 (K40) is an N6-acetyllysine. GTP-binding residues include E71, G144, T145, T179, N206, and N228. Position 71 (E71) interacts with Mg(2+). E254 is a catalytic residue.

It belongs to the tubulin family. Dimer of alpha and beta chains. A typical microtubule is a hollow water-filled tube with an outer diameter of 25 nm and an inner diameter of 15 nM. Alpha-beta heterodimers associate head-to-tail to form protofilaments running lengthwise along the microtubule wall with the beta-tubulin subunit facing the microtubule plus end conferring a structural polarity. Microtubules usually have 13 protofilaments but different protofilament numbers can be found in some organisms and specialized cells. The cofactor is Mg(2+). Undergoes a tyrosination/detyrosination cycle, the cyclic removal and re-addition of a C-terminal tyrosine residue by the enzymes tubulin tyrosine carboxypeptidase (TTCP) and tubulin tyrosine ligase (TTL), respectively. In terms of processing, acetylation of alpha chains at Lys-40 stabilizes microtubules and affects affinity and processivity of microtubule motors. This modification has a role in multiple cellular functions, ranging from cell motility, cell cycle progression or cell differentiation to intracellular trafficking and signaling.

It localises to the cytoplasm. The protein resides in the cytoskeleton. It carries out the reaction GTP + H2O = GDP + phosphate + H(+). In terms of biological role, tubulin is the major constituent of microtubules, a cylinder consisting of laterally associated linear protofilaments composed of alpha- and beta-tubulin heterodimers. Microtubules grow by the addition of GTP-tubulin dimers to the microtubule end, where a stabilizing cap forms. Below the cap, tubulin dimers are in GDP-bound state, owing to GTPase activity of alpha-tubulin. In Oryza sativa subsp. japonica (Rice), this protein is Tubulin alpha-2 chain (TUBA).